A 201-amino-acid chain; its full sequence is Protein GrpE (201 aa).

It belongs to the GrpE family. Homodimer.

The protein localises to the cytoplasm. Its function is as follows. Participates actively in the response to hyperosmotic and heat shock by preventing the aggregation of stress-denatured proteins, in association with DnaK and GrpE. It is the nucleotide exchange factor for DnaK and may function as a thermosensor. Unfolded proteins bind initially to DnaJ; upon interaction with the DnaJ-bound protein, DnaK hydrolyzes its bound ATP, resulting in the formation of a stable complex. GrpE releases ADP from DnaK; ATP binding to DnaK triggers the release of the substrate protein, thus completing the reaction cycle. Several rounds of ATP-dependent interactions between DnaJ, DnaK and GrpE are required for fully efficient folding. This Shewanella denitrificans (strain OS217 / ATCC BAA-1090 / DSM 15013) protein is Protein GrpE.